A 171-amino-acid chain; its full sequence is S-ribosylhomocysteine lyase (171 aa).

The Fe cation site is built by His-54, His-58, and Cys-128.

Belongs to the LuxS family. As to quaternary structure, homodimer. The cofactor is Fe cation.

The catalysed reaction is S-(5-deoxy-D-ribos-5-yl)-L-homocysteine = (S)-4,5-dihydroxypentane-2,3-dione + L-homocysteine. Involved in the synthesis of autoinducer 2 (AI-2) which is secreted by bacteria and is used to communicate both the cell density and the metabolic potential of the environment. The regulation of gene expression in response to changes in cell density is called quorum sensing. Catalyzes the transformation of S-ribosylhomocysteine (RHC) to homocysteine (HC) and 4,5-dihydroxy-2,3-pentadione (DPD). The sequence is that of S-ribosylhomocysteine lyase from Photorhabdus laumondii subsp. laumondii (strain DSM 15139 / CIP 105565 / TT01) (Photorhabdus luminescens subsp. laumondii).